The sequence spans 66 residues: Transmembrane protein B66L (66 aa).

The N-terminal stretch at 1-20 is a signal peptide; the sequence is MDIKRALILFLLFLVVLSNA. Over 21 to 40 the chain is Extracellular; the sequence is FVDYIISNFNHAVTCRKPTY. The chain crosses the membrane as a helical span at residues 41-61; sequence FGIVLQGIFLVILFSIVDYLI. Over 62 to 66 the chain is Cytoplasmic; it reads NENIL.

It belongs to the asfivirus B66L family.

Its subcellular location is the host membrane. The chain is Transmembrane protein B66L from Ornithodoros (relapsing fever ticks).